A 901-amino-acid chain; its full sequence is Protein translocase subunit SecA (901 aa).

Residues Q87, 105 to 109 (GEGKT), and D512 contribute to the ATP site. Residues 852–901 (AQMQQLSHQSDDEAAAEDLAAQTGERKVGRNDPCPCGSGKKYKQCHGRLS) form a disordered region. 4 residues coordinate Zn(2+): C885, C887, C896, and H897. Residues 891–901 (KKYKQCHGRLS) show a composition bias toward basic residues.

Belongs to the SecA family. As to quaternary structure, monomer and homodimer. Part of the essential Sec protein translocation apparatus which comprises SecA, SecYEG and auxiliary proteins SecDF-YajC and YidC. Zn(2+) is required as a cofactor.

It is found in the cell inner membrane. It localises to the cytoplasm. The enzyme catalyses ATP + H2O + cellular proteinSide 1 = ADP + phosphate + cellular proteinSide 2.. Functionally, part of the Sec protein translocase complex. Interacts with the SecYEG preprotein conducting channel. Has a central role in coupling the hydrolysis of ATP to the transfer of proteins into and across the cell membrane, serving both as a receptor for the preprotein-SecB complex and as an ATP-driven molecular motor driving the stepwise translocation of polypeptide chains across the membrane. This chain is Protein translocase subunit SecA, found in Klebsiella pneumoniae (strain 342).